A 156-amino-acid chain; its full sequence is Putative pre-16S rRNA nuclease (156 aa).

It belongs to the YqgF nuclease family.

It is found in the cytoplasm. Functionally, could be a nuclease involved in processing of the 5'-end of pre-16S rRNA. The chain is Putative pre-16S rRNA nuclease from Ehrlichia ruminantium (strain Gardel).